A 481-amino-acid chain; its full sequence is Aspartyl/glutamyl-tRNA(Asn/Gln) amidotransferase subunit B (481 aa).

Belongs to the GatB/GatE family. GatB subfamily. As to quaternary structure, heterotrimer of A, B and C subunits.

It carries out the reaction L-glutamyl-tRNA(Gln) + L-glutamine + ATP + H2O = L-glutaminyl-tRNA(Gln) + L-glutamate + ADP + phosphate + H(+). The catalysed reaction is L-aspartyl-tRNA(Asn) + L-glutamine + ATP + H2O = L-asparaginyl-tRNA(Asn) + L-glutamate + ADP + phosphate + 2 H(+). Allows the formation of correctly charged Asn-tRNA(Asn) or Gln-tRNA(Gln) through the transamidation of misacylated Asp-tRNA(Asn) or Glu-tRNA(Gln) in organisms which lack either or both of asparaginyl-tRNA or glutaminyl-tRNA synthetases. The reaction takes place in the presence of glutamine and ATP through an activated phospho-Asp-tRNA(Asn) or phospho-Glu-tRNA(Gln). The sequence is that of Aspartyl/glutamyl-tRNA(Asn/Gln) amidotransferase subunit B from Ectopseudomonas mendocina (strain ymp) (Pseudomonas mendocina).